Consider the following 136-residue polypeptide: ATP synthase F(0) complex subunit C1, mitochondrial (136 aa).

A mitochondrion-targeting transit peptide spans 1 to 61 (MQTTGALLIS…REFQTSVVSR (61 aa)). A helical membrane pass occupies residues 77–97 (VGVAGSGAGIGTVFGSLIIGY). At lysine 104 the chain carries N6,N6,N6-trimethyllysine. The helical transmembrane segment at 112 to 132 (ILGFALSEAMGLFCLMVAFLI) threads the bilayer.

Belongs to the ATPase C chain family. In terms of assembly, homooctamer; the c-ring consists of eight c subunits forming a circle, and each subunit adopts a hairpin shape. Component of the ATP synthase complex composed at least of ATP5F1A/subunit alpha, ATP5F1B/subunit beta, ATP5MC1/subunit c (homooctomer), MT-ATP6/subunit a, MT-ATP8/subunit 8, ATP5ME/subunit e, ATP5MF/subunit f, ATP5MG/subunit g, ATP5MK/subunit k, ATP5MJ/subunit j, ATP5F1C/subunit gamma, ATP5F1D/subunit delta, ATP5F1E/subunit epsilon, ATP5PF/subunit F6, ATP5PB/subunit b, ATP5PD/subunit d, ATP5PO/subunit OSCP. ATP synthase complex consists of a soluble F(1) head domain (subunits alpha(3) and beta(3)) - the catalytic core - and a membrane F(0) domain - the membrane proton channel (subunits c, a, 8, e, f, g, k and j). These two domains are linked by a central stalk (subunits gamma, delta, and epsilon) rotating inside the F1 region and a stationary peripheral stalk (subunits F6, b, d, and OSCP). Interacts with TMEM70 (homooligomer form); this interaction facilitates the oligomer formation of subunit c/ATP5MC1 (c-ring) and the c-ring membrane insertion and also protects ATP5MC1 against intramitochondrial proteolysis. Post-translationally, trimethylated by ATPSCKMT at Lys-104. Methylation is required for proper incorporation of the C subunit into the ATP synthase complex and mitochondrial respiration.

The protein resides in the mitochondrion membrane. It carries out the reaction H(+)(in) = H(+)(out). Subunit c, of the mitochondrial membrane ATP synthase complex (F(1)F(0) ATP synthase or Complex V) that produces ATP from ADP in the presence of a proton gradient across the membrane which is generated by electron transport complexes of the respiratory chain. ATP synthase complex consist of a soluble F(1) head domain - the catalytic core - and a membrane F(1) domain - the membrane proton channel. These two domains are linked by a central stalk rotating inside the F(1) region and a stationary peripheral stalk. During catalysis, ATP synthesis in the catalytic domain of F(1) is coupled via a rotary mechanism of the central stalk subunits to proton translocation. With the subunit a (MT-ATP6), forms the proton-conducting channel in the F(0) domain, that contains two crucial half-channels (inlet and outlet) that facilitate proton movement from the mitochondrial intermembrane space (IMS) into the matrix. Protons are taken up via the inlet half-channel and released through the outlet half-channel, following a Grotthuss mechanism. This chain is ATP synthase F(0) complex subunit C1, mitochondrial, found in Ovis aries (Sheep).